A 485-amino-acid polypeptide reads, in one-letter code: Alpha-amylase (485 aa).

A signal peptide spans 1-18; sequence MQHLSILLVVLGSSIAFA. Gln19 bears the Pyrrolidone carboxylic acid mark. A disulfide bridge links Cys46 with Cys102. Ca(2+) is bound by residues Asn116, Arg163, and Asp172. Residues Cys152 and Cys165 are joined by a disulfide bond. Residue Arg200 coordinates chloride. The active-site Nucleophile is the Asp202. His206 provides a ligand contact to Ca(2+). Glu238 acts as the Proton donor in catalysis. Residue Asn301 coordinates chloride. Cys369 and Cys375 are disulfide-bonded. Asn423 and Asn449 each carry an N-linked (GlcNAc...) asparagine glycan. A disulfide bridge connects residues Cys440 and Cys452.

This sequence belongs to the glycosyl hydrolase 13 family. Monomer. The cofactor is Ca(2+). Chloride serves as cofactor.

It catalyses the reaction Endohydrolysis of (1-&gt;4)-alpha-D-glucosidic linkages in polysaccharides containing three or more (1-&gt;4)-alpha-linked D-glucose units.. Involved in the digestion of starch. In Hypothenemus hampei (Coffee berry borer), this protein is Alpha-amylase.